A 498-amino-acid polypeptide reads, in one-letter code: ATP synthase subunit beta, chloroplastic (498 aa).

172–179 (GGAGVGKT) lines the ATP pocket.

The protein belongs to the ATPase alpha/beta chains family. F-type ATPases have 2 components, CF(1) - the catalytic core - and CF(0) - the membrane proton channel. CF(1) has five subunits: alpha(3), beta(3), gamma(1), delta(1), epsilon(1). CF(0) has four main subunits: a(1), b(1), b'(1) and c(9-12).

The protein resides in the plastid. It localises to the chloroplast thylakoid membrane. The catalysed reaction is ATP + H2O + 4 H(+)(in) = ADP + phosphate + 5 H(+)(out). In terms of biological role, produces ATP from ADP in the presence of a proton gradient across the membrane. The catalytic sites are hosted primarily by the beta subunits. The sequence is that of ATP synthase subunit beta, chloroplastic from Buxus microphylla (Littleleaf boxwood).